A 704-amino-acid polypeptide reads, in one-letter code: MLTPIIRKFQYGQHTVTIETGMMARQATAAVMVSMDDTAVFVTVVGQKKAKPGQSFFPLTVNYQERTYAAGRIPGSFFRREGRPSEGETLTSRLIDRPIRPLFPDSFLNEVQVIATVVSVNPQINPDIVALIGASAALSLSGIPFNGPIGAARVGFINDQYVLNPTTDELKESRLDLVVAGTAGAVLMVESEADILSEEQMLGAVVFGHEQQQVVIENINALVAEAGKPKWDWQAEPVNEALHARVAELAEARLGDAYRITEKQERYTQVDAIKADVTEALLAQDDTLDAAEIQDILASVEKNVVRSRVLRGEPRIDGREKDMIRGLDVRTGILPRTHGSALFTRGETQALVTATLGTARDAQNIDELMGERTDSFLLHYNFPPYCVGETGMVGSPKRREIGHGRLAKRGVLAVMPSASEFPYTIRVVSEITESNGSSSMASVCGASLALMDAGVPIKAAVAGIAMGLVKEGDNFVVLSDILGDEDHLGDMDFKVAGSRDGVTALQMDIKIEGITREIMQVALNQAKGARLHILGVMEQAISTPRGDISEFAPRIYTMKINPEKIKDVIGKGGSVIRALTDETGTTIEIEDDGTIKIAATDGDKAKHAIRRIEEITAEIEVGRIYAGKVTRIVDFGAFVAIGGGKEGLVHISQIADKRVEKVTDYLQMGQDVPVKVMEVDRQGRIRLSIKEATTPDAEAPEAAE.

Residues Asp-486 and Asp-492 each coordinate Mg(2+). Positions Pro-553–Ile-612 constitute a KH domain. The S1 motif domain occupies Gly-622–Lys-690.

Belongs to the polyribonucleotide nucleotidyltransferase family. Component of the RNA degradosome, which is a multiprotein complex involved in RNA processing and mRNA degradation. The cofactor is Mg(2+).

Its subcellular location is the cytoplasm. It carries out the reaction RNA(n+1) + phosphate = RNA(n) + a ribonucleoside 5'-diphosphate. Functionally, involved in mRNA degradation. Catalyzes the phosphorolysis of single-stranded polyribonucleotides processively in the 3'- to 5'-direction. This Yersinia pseudotuberculosis serotype IB (strain PB1/+) protein is Polyribonucleotide nucleotidyltransferase.